A 157-amino-acid polypeptide reads, in one-letter code: MDIFSFFSADFWQANSLCFMFISAFLSATVLPGNSEVIFVALAVPKLMLGSLFNVDILALILIATAGNSLGSLTTYGIGRWMPKFDPKNYRTLWAINQLRRYGAIALLLSWLPVVGDLFCAIAGWLRLNFVTSSLFIFLGKMVRYVALLFLSTPFLL.

4 consecutive transmembrane segments (helical) span residues I3–S23, A24–V44, L47–G67, and I105–W125.

To E.coli YqaA.

It localises to the cell membrane. This is an uncharacterized protein from Haemophilus influenzae (strain ATCC 51907 / DSM 11121 / KW20 / Rd).